The chain runs to 141 residues: Putative antirestriction protein YubI (141 aa).

The protein belongs to the antirestriction protein family.

The chain is Putative antirestriction protein YubI (yubI) from Escherichia coli (strain K12).